An 839-amino-acid polypeptide reads, in one-letter code: Periplasmic nitrate reductase (839 aa).

The segment at residues 1–34 is a signal peptide (tat-type signal); that stretch reads MTLTRRDFIKANAAAAAATAAAVNLPLVPSMAQA. The 4Fe-4S Mo/W bis-MGD-type domain occupies 46-102; sequence IKWDKAACRFCGTGCSVLVGTKGGRVVATQGDPDAPVNRGLNCIKGYFLSKIMYGED. [4Fe-4S] cluster-binding residues include cysteine 53, cysteine 56, cysteine 60, and cysteine 88. Mo-bis(molybdopterin guanine dinucleotide) contacts are provided by residues lysine 90, glutamine 157, asparagine 182, cysteine 186, 219–226, 250–254, 269–271, methionine 379, glutamine 383, asparagine 489, 515–516, lysine 538, aspartate 565, and 729–738; these read WGSNMAEM, STYEH, QTD, SD, and TGRVLEHWHT. Phenylalanine 805 is a binding site for substrate. Residues asparagine 813 and lysine 830 each coordinate Mo-bis(molybdopterin guanine dinucleotide).

It belongs to the prokaryotic molybdopterin-containing oxidoreductase family. NasA/NapA/NarB subfamily. Component of the periplasmic nitrate reductase NapAB complex composed of NapA and NapB. The cofactor is [4Fe-4S] cluster. Requires Mo-bis(molybdopterin guanine dinucleotide) as cofactor. Post-translationally, predicted to be exported by the Tat system. The position of the signal peptide cleavage has not been experimentally proven.

The protein localises to the periplasm. It carries out the reaction 2 Fe(II)-[cytochrome] + nitrate + 2 H(+) = 2 Fe(III)-[cytochrome] + nitrite + H2O. Its function is as follows. Catalytic subunit of the periplasmic nitrate reductase complex NapAB. Receives electrons from NapB and catalyzes the reduction of nitrate to nitrite. The polypeptide is Periplasmic nitrate reductase (Laribacter hongkongensis (strain HLHK9)).